The sequence spans 310 residues: Ribosomal RNA small subunit methyltransferase H (310 aa).

S-adenosyl-L-methionine contacts are provided by residues 35 to 37 (GGH), D52, F79, D100, and Q107.

The protein belongs to the methyltransferase superfamily. RsmH family.

The protein resides in the cytoplasm. It carries out the reaction cytidine(1402) in 16S rRNA + S-adenosyl-L-methionine = N(4)-methylcytidine(1402) in 16S rRNA + S-adenosyl-L-homocysteine + H(+). Its function is as follows. Specifically methylates the N4 position of cytidine in position 1402 (C1402) of 16S rRNA. The chain is Ribosomal RNA small subunit methyltransferase H from Anaeromyxobacter dehalogenans (strain 2CP-1 / ATCC BAA-258).